Here is a 346-residue protein sequence, read N- to C-terminus: Enoyl-[acyl-carrier-protein] reductase, mitochondrial (346 aa).

The transit peptide at 1 to 22 directs the protein to the mitochondrion; sequence MQKTIRSQALIYRKFGDPLKVL. Catalysis depends on Tyr59, which acts as the Proton donor. Residues Asn131, 157–160, 180–182, 249–252, 274–276, and Lys332 contribute to the NADP(+) site; these read NSGV, RNR, YGGM, and VAV.

It belongs to the zinc-containing alcohol dehydrogenase family. Quinone oxidoreductase subfamily. In terms of assembly, homodimer.

The protein localises to the mitochondrion. The catalysed reaction is a 2,3-saturated acyl-[ACP] + NADP(+) = a (2E)-enoyl-[ACP] + NADPH + H(+). Its function is as follows. Catalyzes the NADPH-dependent reduction of trans-2-enoyl thioesters in mitochondrial fatty acid synthesis (fatty acid synthesis type II). Fatty acid chain elongation in mitochondria uses acyl carrier protein (ACP) as an acyl group carrier, but the enzyme accepts both ACP and CoA thioesters as substrates in vitro. May provide the octanoyl chain used for lipoic acid biosynthesis, regulating protein lipoylation and mitochondrial respiratory activity. Involved in iron homeostasis; affecting Fe-S cluster assembly and ceramide metabolism. Required for proper morphology and bioenergetic functions of mitochondria. Required for maintenance of neurons. The chain is Enoyl-[acyl-carrier-protein] reductase, mitochondrial from Caenorhabditis elegans.